A 339-amino-acid chain; its full sequence is Ketol-acid reductoisomerase (NADP(+)) (339 aa).

Positions 1–182 constitute a KARI N-terminal Rossmann domain; sequence MRVYYDRDAD…GGGRAGIIET (182 aa). NADP(+)-binding positions include 24–27, R48, S51, S53, and 83–86; these read YGSQ and DELQ. H108 is an active-site residue. G134 contributes to the NADP(+) binding site. A KARI C-terminal knotted domain is found at 183 to 328; it reads TFKEECETDL…ARLRDMMPWI (146 aa). Residues D191, E195, E227, and E231 each contribute to the Mg(2+) site. Position 252 (S252) interacts with substrate.

Belongs to the ketol-acid reductoisomerase family. It depends on Mg(2+) as a cofactor.

The catalysed reaction is (2R)-2,3-dihydroxy-3-methylbutanoate + NADP(+) = (2S)-2-acetolactate + NADPH + H(+). The enzyme catalyses (2R,3R)-2,3-dihydroxy-3-methylpentanoate + NADP(+) = (S)-2-ethyl-2-hydroxy-3-oxobutanoate + NADPH + H(+). It functions in the pathway amino-acid biosynthesis; L-isoleucine biosynthesis; L-isoleucine from 2-oxobutanoate: step 2/4. Its pathway is amino-acid biosynthesis; L-valine biosynthesis; L-valine from pyruvate: step 2/4. Involved in the biosynthesis of branched-chain amino acids (BCAA). Catalyzes an alkyl-migration followed by a ketol-acid reduction of (S)-2-acetolactate (S2AL) to yield (R)-2,3-dihydroxy-isovalerate. In the isomerase reaction, S2AL is rearranged via a Mg-dependent methyl migration to produce 3-hydroxy-3-methyl-2-ketobutyrate (HMKB). In the reductase reaction, this 2-ketoacid undergoes a metal-dependent reduction by NADPH to yield (R)-2,3-dihydroxy-isovalerate. This is Ketol-acid reductoisomerase (NADP(+)) from Bradyrhizobium sp. (strain ORS 278).